A 295-amino-acid polypeptide reads, in one-letter code: Putative ribose uptake protein RbsU (295 aa).

The next 10 helical transmembrane spans lie at 5–24 (ALLI…TIAS), 34–56 (ILGT…GLAF), 63–80 (FFSI…IITF), 95–114 (TTAF…LGNW), 121–139 (LLGA…MTVW), 154–171 (AVLL…YSAA), 183–205 (FLPQ…TIKG), 220–237 (IFSG…LISA), 244–266 (LATG…IWFL), and 276–293 (TVTI…TITV).

It belongs to the GRP transporter (TC 2.A.7.5) family.

It is found in the cell membrane. Its function is as follows. Could be involved in the uptake of ribose. This chain is Putative ribose uptake protein RbsU (rbsU), found in Enterococcus faecalis (strain ATCC 700802 / V583).